The chain runs to 225 residues: Ribosome maturation factor RimM (225 aa).

Residues 144-225 (ADEFYWVDLI…RIVVDWEADY (82 aa)) enclose the PRC barrel domain.

It belongs to the RimM family. In terms of assembly, binds ribosomal protein uS19.

The protein localises to the cytoplasm. An accessory protein needed during the final step in the assembly of 30S ribosomal subunit, possibly for assembly of the head region. Essential for efficient processing of 16S rRNA. May be needed both before and after RbfA during the maturation of 16S rRNA. It has affinity for free ribosomal 30S subunits but not for 70S ribosomes. The protein is Ribosome maturation factor RimM of Burkholderia lata (strain ATCC 17760 / DSM 23089 / LMG 22485 / NCIMB 9086 / R18194 / 383).